The primary structure comprises 519 residues: Cilia- and flagella-associated protein 157 (519 aa).

Residues 1-11 (MPPKKKGKRGP) are compositionally biased toward basic residues. A disordered region spans residues 1–25 (MPPKKKGKRGPSAKTKEKETVRVAS). 2 coiled-coil regions span residues 28–185 (VTEQ…EKKV) and 241–356 (IELI…QRTL).

The protein belongs to the CFAP157 family.

The protein localises to the cytoplasm. Its subcellular location is the cytoskeleton. It is found in the cilium basal body. In terms of biological role, specifically required during spermatogenesis for flagellum morphogenesis and sperm motility. The chain is Cilia- and flagella-associated protein 157 from Xenopus tropicalis (Western clawed frog).